The primary structure comprises 304 residues: Homoserine kinase (304 aa).

90 to 100 (PLARGLGSSAS) contributes to the ATP binding site.

It belongs to the GHMP kinase family. Homoserine kinase subfamily.

It localises to the cytoplasm. The enzyme catalyses L-homoserine + ATP = O-phospho-L-homoserine + ADP + H(+). It functions in the pathway amino-acid biosynthesis; L-threonine biosynthesis; L-threonine from L-aspartate: step 4/5. Functionally, catalyzes the ATP-dependent phosphorylation of L-homoserine to L-homoserine phosphate. In Staphylococcus aureus (strain MSSA476), this protein is Homoserine kinase.